The chain runs to 119 residues: Ribonuclease P protein component (119 aa).

The protein belongs to the RnpA family. Consists of a catalytic RNA component (M1 or rnpB) and a protein subunit.

The enzyme catalyses Endonucleolytic cleavage of RNA, removing 5'-extranucleotides from tRNA precursor.. Functionally, RNaseP catalyzes the removal of the 5'-leader sequence from pre-tRNA to produce the mature 5'-terminus. It can also cleave other RNA substrates such as 4.5S RNA. The protein component plays an auxiliary but essential role in vivo by binding to the 5'-leader sequence and broadening the substrate specificity of the ribozyme. The chain is Ribonuclease P protein component from Edwardsiella ictaluri (strain 93-146).